We begin with the raw amino-acid sequence, 430 residues long: uncharacterized protein (430 aa).

Its subcellular location is the cytoplasm. It localises to the nucleus. This is an uncharacterized protein from Schizosaccharomyces pombe (strain 972 / ATCC 24843) (Fission yeast).